Reading from the N-terminus, the 522-residue chain is AAA ATPase forming ring-shaped complexes (522 aa).

The tract at residues 1–26 is disordered; sequence MGQEKHTDAASQSRDPEAVAAHENDQ. A coiled-coil region spans residues 20–57; the sequence is AAHENDQLRQRNHALAKALTRATEELRKAKAQLEQFMA. 248 to 253 is a binding site for ATP; sequence GNGKTL.

The protein belongs to the AAA ATPase family. In terms of assembly, homohexamer. Assembles into a hexameric ring structure.

This Bifidobacterium animalis subsp. lactis (strain AD011) protein is AAA ATPase forming ring-shaped complexes.